The primary structure comprises 365 residues: Peptide chain release factor 2 (365 aa).

Gln-251 is modified (N5-methylglutamine).

Belongs to the prokaryotic/mitochondrial release factor family. Post-translationally, methylated by PrmC. Methylation increases the termination efficiency of RF2.

The protein localises to the cytoplasm. In terms of biological role, peptide chain release factor 2 directs the termination of translation in response to the peptide chain termination codons UGA and UAA. The chain is Peptide chain release factor 2 from Neorickettsia sennetsu (strain ATCC VR-367 / Miyayama) (Ehrlichia sennetsu).